The sequence spans 411 residues: Indian hedgehog protein (411 aa).

An N-terminal signal peptide occupies residues 1–27 (MSPARLRPRLHFCLVLLLLLVVPAAWG). The N-palmitoyl cysteine moiety is linked to residue C28. Residues E94, E95, D100, T130, E131, D134, and D136 each coordinate Ca(2+). H145, D152, and H187 together coordinate Zn(2+). A lipid anchor (Cholesterol glycine ester) is attached at G202. The N-linked (GlcNAc...) asparagine glycan is linked to N282.

The protein belongs to the hedgehog family. As to quaternary structure, multimer. Interacts with BOC and CDON. Interacts with PTCH1. Interacts with glypican GPC3. Post-translationally, cholesterylation is required for N-product targeting to lipid rafts and multimerization. In terms of processing, the C-terminal domain displays an autoproteolysis activity and a cholesterol transferase activity. Both activities result in the cleavage of the full-length protein and covalent attachment of a cholesterol moiety to the C-terminal of the newly generated N-product. The N-product is the active species in both local and long-range signaling, whereas the C-product is degraded in the endoplasmic reticulum. N-palmitoylation by HHAT of N-product is required for indian hedgehog protein N-product multimerization and full activity. As to expression, expressed in embryonic lung, and in adult kidney and liver.

It localises to the cell membrane. Its subcellular location is the endoplasmic reticulum membrane. It is found in the golgi apparatus membrane. The protein resides in the secreted. It catalyses the reaction glycyl-L-cysteinyl-[protein] + cholesterol + H(+) = [protein]-C-terminal glycyl cholesterol ester + N-terminal L-cysteinyl-[protein]. In terms of biological role, plays a role in embryonic morphogenesis; it is involved in the regulation of endochondral skeleton formation, and the development of retinal pigment epithelium (RPE), photoreceptors and periocular tissues. Its function is as follows. The C-terminal part of the indian hedgehog protein precursor displays an autoproteolysis and a cholesterol transferase activity. Both activities result in the cleavage of the full-length protein into two parts followed by the covalent attachment of a cholesterol moiety to the C-terminal of the newly generated N-product. Both activities occur in the endoplasmic reticulum. Plays a role in hedgehog paracrine signaling. Associated with the very-low-density lipoprotein (VLDL) particles to function as a circulating morphogen for endothelial cell integrity maintenance. The dually lipidated indian hedgehog protein N-product is a morphogen which is essential for a variety of patterning events during development. Binds to the patched (PTCH1) receptor, which functions in association with smoothened (SMO), to activate the transcription of target genes. Plays a role in morphogenesis of the skeleton by coordinating growth and differentiation of the endochondral skeleton. Positively regulates PTHLH expression during endochondral bone formation preventing chondrocyte hypertrophy. In contrast, participates in normal chondrocyte proliferation in a PTHLH-independent pathway. The sequence is that of Indian hedgehog protein from Homo sapiens (Human).